A 376-amino-acid chain; its full sequence is MKDVPAFLQQSQSSGPGQAAVWHRLEELYTKKLWHQLTLEVLDFVQDPCFAQGDGLIKLYENFISEFEHRVNPLSLVEIILHVVRQMTDPNVALTFLEKTREKVKSSDEAVILCKTAIGALKLNIGDLQATKETIEDVEEMLNNLPGVTSVHSRFYDLSSKYYQTIGNHASYYKDALRFLGCVDIKDLPVSEQQERAFTLGLAGLLGEGVFNFGELLMHPVLESLRDTDRQWLIDTLYAFNSGAVDRFQTLKCAWGQQPDLAANEAQLLRKIQLLCLMEMTFTRPANHRQLTFEEIAKSAKITVNKVELLVMKALSVGLVRGSIDEVDKRVHMTWVQPRVLDLQQIKGMKDRLELWCTDVKSMEMLVEHQAQDILT.

The PCI domain maps to 171–338; sequence SYYKDALRFL…KRVHMTWVQP (168 aa). The residue at position 298 (Lys-298) is an N6-acetyllysine.

Belongs to the proteasome subunit S11 family. Component of the 19S proteasome regulatory particle complex. The 26S proteasome consists of a 20S core particle (CP) and two 19S regulatory subunits (RP). The regulatory particle is made of a lid composed of 9 subunits including PSMD13, a base containing 6 ATPases and few additional components.

Functionally, component of the 26S proteasome, a multiprotein complex involved in the ATP-dependent degradation of ubiquitinated proteins. This complex plays a key role in the maintenance of protein homeostasis by removing misfolded or damaged proteins, which could impair cellular functions, and by removing proteins whose functions are no longer required. Therefore, the proteasome participates in numerous cellular processes, including cell cycle progression, apoptosis, or DNA damage repair. The polypeptide is 26S proteasome non-ATPase regulatory subunit 13 (Psmd13) (Mus musculus (Mouse)).